Reading from the N-terminus, the 212-residue chain is Membrane-bound lytic murein transglycosylase E (212 aa).

This sequence belongs to the transglycosylase Slt family.

The catalysed reaction is Exolytic cleavage of the (1-&gt;4)-beta-glycosidic linkage between N-acetylmuramic acid (MurNAc) and N-acetylglucosamine (GlcNAc) residues in peptidoglycan, from either the reducing or the non-reducing ends of the peptidoglycan chains, with concomitant formation of a 1,6-anhydrobond in the MurNAc residue.. Its function is as follows. Murein-degrading enzyme. May play a role in recycling of muropeptides during cell elongation and/or cell division. This chain is Membrane-bound lytic murein transglycosylase E (mltE), found in Buchnera aphidicola subsp. Baizongia pistaciae (strain Bp).